The following is a 186-amino-acid chain: Large ribosomal subunit protein uL22 (186 aa).

S158 is modified (phosphoserine). The disordered stretch occupies residues 159–186 (KATDDEPAKKKLSKKKLQRQKEKMLRSE). At T161 the chain carries Phosphothreonine. Basic and acidic residues predominate over residues 177 to 186 (RQKEKMLRSE).

The protein belongs to the universal ribosomal protein uL22 family.

This is Large ribosomal subunit protein uL22 (RpL17) from Drosophila melanogaster (Fruit fly).